The following is a 756-amino-acid chain: Pro-neuregulin-2, membrane-bound isoform (756 aa).

Residues 1–19 (MRRDPAPGFSMLLFGVSLA) constitute a propeptide that is removed on maturation. The Extracellular portion of the chain corresponds to 20 to 315 (CYSPSLKSVQ…KEAEELYQKR (296 aa)). 3 N-linked (GlcNAc...) asparagine glycosylation sites follow: Asn-55, Asn-186, and Asn-254. The region spanning 145-240 (PKLKKMKSQT…RGRLHVNSVS (96 aa)) is the Ig-like C2-type domain. 4 disulfides stabilise this stretch: Cys-165–Cys-219, Cys-253–Cys-267, Cys-261–Cys-278, and Cys-280–Cys-289. Residues 249-290 (HARKCNETAKSYCVNGGVCYYIEGINQLSCKCPVGYTGDRCQ) enclose the EGF-like domain. Asn-296 carries an N-linked (GlcNAc...) asparagine glycan. A helical transmembrane segment spans residues 316-336 (VLTITGICVALLVVGIVCVVA). The Cytoplasmic portion of the chain corresponds to 337-756 (YCKTKKQRRQ…TRAKQDSGPL (420 aa)). Disordered stretches follow at residues 402 to 439 (TFSG…SESL), 557 to 578 (LLRH…DMQR), 608 to 694 (ASPF…DGAL), and 711 to 756 (LRSD…SGPL). Residues 404-416 (SGSHSCSPSHHCS) are compositionally biased toward low complexity. Residues 424–437 (HRHESHTWSLERSE) show a composition bias toward basic and acidic residues. Low complexity predominate over residues 654-682 (LNGLAAQRARAARDSLSLSSGSGCGSASA).

It belongs to the neuregulin family. As to quaternary structure, interacts with ERBB3 and ERBB4. Post-translationally, proteolytic cleavage close to the plasma membrane on the external face leads to the release of the soluble growth factor form. Extensive glycosylation precedes the proteolytic cleavage. As to expression, highest expression in the brain, with lower levels in the lung. In the cerebellum, found in granule and Purkinje cells.

The protein resides in the cell membrane. The protein localises to the secreted. Functionally, direct ligand for ERBB3 and ERBB4 tyrosine kinase receptors. Concomitantly recruits ERBB1 and ERBB2 coreceptors, resulting in ligand-stimulated tyrosine phosphorylation and activation of the ERBB receptors. May also promote the heterodimerization with the EGF receptor. In Mus musculus (Mouse), this protein is Pro-neuregulin-2, membrane-bound isoform (Nrg2).